A 243-amino-acid polypeptide reads, in one-letter code: Probable septum site-determining protein MinC (243 aa).

The protein belongs to the MinC family. As to quaternary structure, interacts with MinD and FtsZ.

Its function is as follows. Cell division inhibitor that blocks the formation of polar Z ring septums. Rapidly oscillates between the poles of the cell to destabilize FtsZ filaments that have formed before they mature into polar Z rings. Prevents FtsZ polymerization. This is Probable septum site-determining protein MinC from Wigglesworthia glossinidia brevipalpis.